The chain runs to 118 residues: Ribonuclease P protein component (118 aa).

This sequence belongs to the RnpA family. Consists of a catalytic RNA component (M1 or rnpB) and a protein subunit.

It carries out the reaction Endonucleolytic cleavage of RNA, removing 5'-extranucleotides from tRNA precursor.. In terms of biological role, RNaseP catalyzes the removal of the 5'-leader sequence from pre-tRNA to produce the mature 5'-terminus. It can also cleave other RNA substrates such as 4.5S RNA. The protein component plays an auxiliary but essential role in vivo by binding to the 5'-leader sequence and broadening the substrate specificity of the ribozyme. The sequence is that of Ribonuclease P protein component from Rickettsia peacockii (strain Rustic).